We begin with the raw amino-acid sequence, 195 residues long: CASP-like protein 1E2 (195 aa).

At 1–29 the chain is on the cytoplasmic side; sequence MEVESKTSFGGMESKSKEVKVVTGGKLRP. A helical transmembrane segment spans residues 30–50; the sequence is FDLVLRVVALALTLVAAVLLG. Over 51 to 82 the chain is Extracellular; it reads VDKQTKVVSLQLLPTLPPMDVPVTAKWRYLSA. Residues 83 to 103 traverse the membrane as a helical segment; the sequence is FVYFVVSNAIACSYAALSLLL. Residues 104–122 lie on the Cytoplasmic side of the membrane; it reads SVGNSKGNKGLGLAITVMD. A helical transmembrane segment spans residues 123 to 143; sequence LVMVALLFSSNGAAGAIGLMG. The Extracellular segment spans residues 144-165; it reads YEGNSRVRWGKVCNVFGKFCNQ. The chain crosses the membrane as a helical span at residues 166-186; that stretch reads VAVALGLSFFGGLAFFLLVVM. Topologically, residues 187 to 195 are cytoplasmic; it reads AAFALNKRH.

It belongs to the Casparian strip membrane proteins (CASP) family. Homodimer and heterodimers.

It localises to the cell membrane. The protein is CASP-like protein 1E2 of Vitis vinifera (Grape).